A 209-amino-acid chain; its full sequence is NAD(P)H-quinone oxidoreductase subunit N, chloroplastic (209 aa).

The N-terminal 45 residues, 1 to 45 (MGSRAICIQRVAPPCFEASQVKKIKTVGSFLVNTRSKRRRSTGVK), are a transit peptide targeting the chloroplast.

It belongs to the NDH complex subunit N family. Part of the chloroplast NDH complex, composed of a mixture of chloroplast and nucleus encoded subunits. Component of the NDH subcomplex A, at least composed of ndhH, ndhI, ndhJ, ndhK, ndhL, ndhM, ndhN and ndhO.

The protein resides in the plastid. The protein localises to the chloroplast thylakoid membrane. It carries out the reaction a plastoquinone + NADH + (n+1) H(+)(in) = a plastoquinol + NAD(+) + n H(+)(out). It catalyses the reaction a plastoquinone + NADPH + (n+1) H(+)(in) = a plastoquinol + NADP(+) + n H(+)(out). Functionally, NDH shuttles electrons from NAD(P)H:plastoquinone, via FMN and iron-sulfur (Fe-S) centers, to quinones in the photosynthetic chain and possibly in a chloroplast respiratory chain. The immediate electron acceptor for the enzyme in this species is believed to be plastoquinone. Couples the redox reaction to proton translocation, and thus conserves the redox energy in a proton gradient. The polypeptide is NAD(P)H-quinone oxidoreductase subunit N, chloroplastic (Arabidopsis thaliana (Mouse-ear cress)).